We begin with the raw amino-acid sequence, 457 residues long: Siroheme synthase (457 aa).

A precorrin-2 dehydrogenase /sirohydrochlorin ferrochelatase region spans residues 1-204 (MDHLPIFCQL…ADAKAVSEIT (204 aa)). Residues 22–23 (DV) and 43–44 (LA) contribute to the NAD(+) site. S128 is modified (phosphoserine). Residues 216-457 (GEVVLVGAGP…RDKLNWFSNH (242 aa)) form a uroporphyrinogen-III C-methyltransferase region. Residue P225 coordinates S-adenosyl-L-methionine. The active-site Proton acceptor is D248. The active-site Proton donor is the K270. S-adenosyl-L-methionine is bound by residues 301–303 (GGD), I306, 331–332 (TA), M382, and G411.

It in the N-terminal section; belongs to the precorrin-2 dehydrogenase / sirohydrochlorin ferrochelatase family. This sequence in the C-terminal section; belongs to the precorrin methyltransferase family.

The enzyme catalyses uroporphyrinogen III + 2 S-adenosyl-L-methionine = precorrin-2 + 2 S-adenosyl-L-homocysteine + H(+). It catalyses the reaction precorrin-2 + NAD(+) = sirohydrochlorin + NADH + 2 H(+). It carries out the reaction siroheme + 2 H(+) = sirohydrochlorin + Fe(2+). The protein operates within cofactor biosynthesis; adenosylcobalamin biosynthesis; precorrin-2 from uroporphyrinogen III: step 1/1. It participates in cofactor biosynthesis; adenosylcobalamin biosynthesis; sirohydrochlorin from precorrin-2: step 1/1. It functions in the pathway porphyrin-containing compound metabolism; siroheme biosynthesis; precorrin-2 from uroporphyrinogen III: step 1/1. Its pathway is porphyrin-containing compound metabolism; siroheme biosynthesis; siroheme from sirohydrochlorin: step 1/1. The protein operates within porphyrin-containing compound metabolism; siroheme biosynthesis; sirohydrochlorin from precorrin-2: step 1/1. Functionally, multifunctional enzyme that catalyzes the SAM-dependent methylations of uroporphyrinogen III at position C-2 and C-7 to form precorrin-2 via precorrin-1. Then it catalyzes the NAD-dependent ring dehydrogenation of precorrin-2 to yield sirohydrochlorin. Finally, it catalyzes the ferrochelation of sirohydrochlorin to yield siroheme. This chain is Siroheme synthase, found in Citrobacter koseri (strain ATCC BAA-895 / CDC 4225-83 / SGSC4696).